A 274-amino-acid polypeptide reads, in one-letter code: Hydroxyethylthiazole kinase (274 aa).

Residue M51 participates in substrate binding. R127 and S173 together coordinate ATP. Position 200 (G200) interacts with substrate.

This sequence belongs to the Thz kinase family. Mg(2+) serves as cofactor.

It catalyses the reaction 5-(2-hydroxyethyl)-4-methylthiazole + ATP = 4-methyl-5-(2-phosphooxyethyl)-thiazole + ADP + H(+). The protein operates within cofactor biosynthesis; thiamine diphosphate biosynthesis; 4-methyl-5-(2-phosphoethyl)-thiazole from 5-(2-hydroxyethyl)-4-methylthiazole: step 1/1. Its function is as follows. Catalyzes the phosphorylation of the hydroxyl group of 4-methyl-5-beta-hydroxyethylthiazole (THZ). The polypeptide is Hydroxyethylthiazole kinase (Photobacterium profundum (strain SS9)).